A 73-amino-acid chain; its full sequence is Protein SlyX homolog (73 aa).

The disordered stretch occupies residues 54 to 73; it reads LQQAESNAPAAPANERPPHY. Residues 57-67 are compositionally biased toward low complexity; that stretch reads AESNAPAAPAN.

It belongs to the SlyX family.

This chain is Protein SlyX homolog, found in Rhodopseudomonas palustris (strain BisA53).